Here is a 270-residue protein sequence, read N- to C-terminus: 3-methyl-2-oxobutanoate hydroxymethyltransferase (270 aa).

Positions 43 and 82 each coordinate Mg(2+). Residues 43-44, D82, and K112 each bind 3-methyl-2-oxobutanoate; that span reads DS. E114 provides a ligand contact to Mg(2+). The Proton acceptor role is filled by E179.

Belongs to the PanB family. As to quaternary structure, homodecamer; pentamer of dimers. The cofactor is Mg(2+).

The protein localises to the cytoplasm. It catalyses the reaction 3-methyl-2-oxobutanoate + (6R)-5,10-methylene-5,6,7,8-tetrahydrofolate + H2O = 2-dehydropantoate + (6S)-5,6,7,8-tetrahydrofolate. It functions in the pathway cofactor biosynthesis; (R)-pantothenate biosynthesis; (R)-pantoate from 3-methyl-2-oxobutanoate: step 1/2. Its function is as follows. Catalyzes the reversible reaction in which hydroxymethyl group from 5,10-methylenetetrahydrofolate is transferred onto alpha-ketoisovalerate to form ketopantoate. In Oceanobacillus iheyensis (strain DSM 14371 / CIP 107618 / JCM 11309 / KCTC 3954 / HTE831), this protein is 3-methyl-2-oxobutanoate hydroxymethyltransferase.